The primary structure comprises 465 residues: uncharacterized protein (465 aa).

An RAMA domain is found at 6–91 (NVTLSNLIDF…LKLKREYLFR (86 aa)). Disordered regions lie at residues 95 to 377 (TGKN…SNNQ) and 392 to 465 (YNQQ…KSKS). A compositionally biased stretch (low complexity) spans 117-137 (PQQQQQQQQQQQQQQQQQQQP). Residues 156–169 (ETSDQDIDNDDDDA) show a composition bias toward acidic residues. The segment covering 177-190 (TTTTTTTTTTTTTT) has biased composition (low complexity). Basic and acidic residues predominate over residues 208-220 (PKEKKKEKKENIL). Residues 214 to 242 (EKKENILTKKKQQSLQYQQQLQLLQRQNS) adopt a coiled-coil conformation. Residues 226 to 263 (QSLQYQQQLQLLQRQNSPPSVSPSSSTSTSSSTSSPAS) are compositionally biased toward low complexity. A compositionally biased stretch (polar residues) spans 264–294 (NQIFNSFGPNSQNHNQYGINYNSQQHQPQQY). The segment covering 295 to 376 (NNNNNNNNNN…NNNINNNSNN (82 aa)) has biased composition (low complexity). Residues 392-407 (YNQQNPPKHQYPNNFL) are compositionally biased toward polar residues. Low complexity predominate over residues 424–442 (NQSQNQNQNQNQNQNQNQK). Residues 443 to 465 (SKSKSKSKSKFKSKSKSKSKSKS) are compositionally biased toward basic residues.

This is an uncharacterized protein from Dictyostelium discoideum (Social amoeba).